Reading from the N-terminus, the 397-residue chain is S-adenosylmethionine synthase (397 aa).

H15 is a binding site for ATP. D17 is a binding site for Mg(2+). E43 is a K(+) binding site. L-methionine is bound by residues E56 and Q99. Residues 99–109 (QSPDIAMGVNK) are flexible loop. ATP is bound by residues 175-177 (DGK), 241-242 (RF), D250, 256-257 (RK), A273, and K277. D250 is an L-methionine binding site. K281 contributes to the L-methionine binding site.

Belongs to the AdoMet synthase family. In terms of assembly, homotetramer; dimer of dimers. Mg(2+) is required as a cofactor. K(+) serves as cofactor.

Its subcellular location is the cytoplasm. It carries out the reaction L-methionine + ATP + H2O = S-adenosyl-L-methionine + phosphate + diphosphate. It functions in the pathway amino-acid biosynthesis; S-adenosyl-L-methionine biosynthesis; S-adenosyl-L-methionine from L-methionine: step 1/1. Functionally, catalyzes the formation of S-adenosylmethionine (AdoMet) from methionine and ATP. The overall synthetic reaction is composed of two sequential steps, AdoMet formation and the subsequent tripolyphosphate hydrolysis which occurs prior to release of AdoMet from the enzyme. This Acetivibrio thermocellus (strain ATCC 27405 / DSM 1237 / JCM 9322 / NBRC 103400 / NCIMB 10682 / NRRL B-4536 / VPI 7372) (Clostridium thermocellum) protein is S-adenosylmethionine synthase.